A 530-amino-acid chain; its full sequence is Autoinducer-2 kinase (530 aa).

It belongs to the FGGY kinase family.

The protein localises to the cytoplasm. It carries out the reaction (S)-4,5-dihydroxypentane-2,3-dione + ATP = (2S)-2-hydroxy-3,4-dioxopentyl phosphate + ADP + H(+). Its function is as follows. Catalyzes the phosphorylation of autoinducer-2 (AI-2) to phospho-AI-2, which subsequently inactivates the transcriptional regulator LsrR and leads to the transcription of the lsr operon. Phosphorylates the ring-open form of (S)-4,5-dihydroxypentane-2,3-dione (DPD), which is the precursor to all AI-2 signaling molecules, at the C5 position. This chain is Autoinducer-2 kinase, found in Escherichia coli (strain K12 / DH10B).